We begin with the raw amino-acid sequence, 483 residues long: ATP synthase subunit beta (483 aa).

Residue 167–174 participates in ATP binding; sequence GGAGVGKT.

The protein belongs to the ATPase alpha/beta chains family. In terms of assembly, F-type ATPases have 2 components, CF(1) - the catalytic core - and CF(0) - the membrane proton channel. CF(1) has five subunits: alpha(3), beta(3), gamma(1), delta(1), epsilon(1). CF(0) has three main subunits: a(1), b(2) and c(9-12). The alpha and beta chains form an alternating ring which encloses part of the gamma chain. CF(1) is attached to CF(0) by a central stalk formed by the gamma and epsilon chains, while a peripheral stalk is formed by the delta and b chains.

The protein localises to the cell membrane. It catalyses the reaction ATP + H2O + 4 H(+)(in) = ADP + phosphate + 5 H(+)(out). Produces ATP from ADP in the presence of a proton gradient across the membrane. The catalytic sites are hosted primarily by the beta subunits. This chain is ATP synthase subunit beta, found in Paenarthrobacter aurescens (strain TC1).